The chain runs to 506 residues: MSISIRPDEISSIIQQQIEQYDQEVKVANVGTVLQVGDGIARIYGLEKAMAGELLEFEDGTVGIAQNLEEDNVGAVLMGEGREIQEGSTVTATGRIAQIGVGEALIGRVVDALGRAIDGKGDIKASESRLIESPAPGIIARRSVHEPMQTGITAIDSMIPIGRGQRELIIGDRQTGKTAIAIDTIINQKGEDVVCVYVAIGQKASTVANVVQTLQEKGAMDYTVVVAAGASEPATLQFLAPYTGATIAEYFMYKGKATLVIYDDLSKQAQAYRQMSLLLRRPPGREAYPGDVFYIHSRLLERAAKLSDELGKGSMTALPIIETQAGDVSAYIPTNVISITDGQIFLSSDLFNAGIRPAVNPGISVSRVGSAAQTKAMKKVAGKIKLELAQFDDLQAFAQFASDLDKATQDQLARGQRLRELLKQSQNQPLSVAEQVAILYAGINGYLDDIPVDKVTTFTKGLRDYLKSGVNPYFQDVQSKKALGDDEEKALKAALEDYKKTFKATA.

ATP is bound at residue 171–178 (GDRQTGKT).

Belongs to the ATPase alpha/beta chains family. As to quaternary structure, F-type ATPases have 2 components, CF(1) - the catalytic core - and CF(0) - the membrane proton channel. CF(1) has five subunits: alpha(3), beta(3), gamma(1), delta(1), epsilon(1). CF(0) has four main subunits: a(1), b(1), b'(1) and c(9-12).

Its subcellular location is the cellular thylakoid membrane. The enzyme catalyses ATP + H2O + 4 H(+)(in) = ADP + phosphate + 5 H(+)(out). In terms of biological role, produces ATP from ADP in the presence of a proton gradient across the membrane. The alpha chain is a regulatory subunit. This chain is ATP synthase subunit alpha, found in Nostoc sp. (strain PCC 7120 / SAG 25.82 / UTEX 2576).